The primary structure comprises 82 residues: Small ribosomal subunit protein bS16 (82 aa).

It belongs to the bacterial ribosomal protein bS16 family.

The sequence is that of Small ribosomal subunit protein bS16 from Klebsiella pneumoniae subsp. pneumoniae (strain ATCC 700721 / MGH 78578).